The chain runs to 341 residues: tRNA (guanine-N(7)-)-methyltransferase (341 aa).

S-adenosyl-L-methionine is bound by residues glutamate 75, glutamate 100, aspartate 127, and aspartate 150. Aspartate 150 is an active-site residue. Substrate is bound at residue lysine 154. The segment at 156–161 is interaction with RNA; sequence RHNKRR. Aspartate 186 contacts substrate.

This sequence belongs to the class I-like SAM-binding methyltransferase superfamily. TrmB family.

It catalyses the reaction guanosine(46) in tRNA + S-adenosyl-L-methionine = N(7)-methylguanosine(46) in tRNA + S-adenosyl-L-homocysteine. Its pathway is tRNA modification; N(7)-methylguanine-tRNA biosynthesis. Functionally, catalyzes the formation of N(7)-methylguanine at position 46 (m7G46) in tRNA. The polypeptide is tRNA (guanine-N(7)-)-methyltransferase (Xanthomonas euvesicatoria pv. vesicatoria (strain 85-10) (Xanthomonas campestris pv. vesicatoria)).